The sequence spans 103 residues: uncharacterized protein (103 aa).

Positions 12-88 (ADPAAFDEHY…AAADVANFAS (77 aa)) constitute an EthD domain.

This is an uncharacterized protein from Rhodococcus erythropolis (Arthrobacter picolinophilus).